The chain runs to 1067 residues: [F-actin]-monooxygenase MICAL1 (1067 aa).

A monooxygenase domain region spans residues 1-489 (MASPTSTNPA…RDLYDVLAKE (489 aa)). FAD is bound by residues C95, 114–116 (EKR), 121–123 (RHN), F181, Y293, and D393. A Phosphothreonine modification is found at T475. Residues 508–612 (AGTQEELLRW…YLSHFHSAFK (105 aa)) enclose the Calponin-homology (CH) domain. Residue S617 is modified to Phosphoserine. The segment at 645-688 (SRAKENAEDAGGKKLRLEMEAETPSTEVPPDPEPGVPLTPPSQH) is disordered. A compositionally biased stretch (basic and acidic residues) spans 646-663 (RAKENAEDAGGKKLRLEM). Residues 646–666 (RAKENAEDAGGKKLRLEMEAE) adopt a coiled-coil conformation. Residues 671–684 (EVPPDPEPGVPLTP) show a composition bias toward pro residues. One can recognise an LIM zinc-binding domain in the interval 695–757 (DLCALCGEHL…LQHLPQTDHK (63 aa)). Residues C697, C700, H718, C721, C724, C727, C747, and H750 each coordinate Zn(2+). Basic and acidic residues predominate over residues 755–766 (DHKAEGSDRGPE). Disordered regions lie at residues 755 to 838 (DHKA…RSCS) and 867 to 886 (KEEK…VPLD). Over residues 773-789 (PSENSMPPGLSTPTASQ) the composition is skewed to polar residues. Phosphoserine is present on residues S872, S875, and S876. Residues 876 to 886 (SEEEEEDVPLD) are compositionally biased toward acidic residues. Residues 901 to 1067 (GTMNNYPTWR…ELALGTGAQG (167 aa)) are important for interaction with RAB8A. Residues 918–1067 (KEEEMKRFCK…ELALGTGAQG (150 aa)) form the bMERB domain. 2 coiled-coil regions span residues 919 to 962 (EEEM…QSSS) and 999 to 1027 (NLEE…AADR). S1057 carries the post-translational modification Phosphoserine.

It belongs to the Mical family. Interacts with STK38 and STK38L. Interacts with RAB1B, RAB8A, RAB10, RAB13, RAB15 and RAB35 (in their GTP-bound forms); binding to RAB1B is of low affinity compared to other Rab proteins; at least in case of RAB8A and RAB10 can bind 2 molecules of the Rab proteins simultaneously; ternary complex formation of RAB8A, RAB13 and MICAL1 is possible. Associates with the SH3 domain of NEDD9. Interacts with VIM and PLXNA3. Interacts with GRAF1/ARHGAP26, GRAF2/ARHGAP10, RAB8A, RAB8B and RAB10; may bind simultaneously to GRAFs and Rabs and connects GRAFs to Rabs. Does not interact with RAB1 and RAB11A. It depends on FAD as a cofactor. Expressed in the thymus, lung, spleen, kidney, testis and hematopoietic cells.

It is found in the cytoplasm. The protein localises to the cytoskeleton. Its subcellular location is the endosome membrane. It localises to the midbody. It carries out the reaction L-methionyl-[F-actin] + NADPH + O2 + H(+) = L-methionyl-(R)-S-oxide-[F-actin] + NADP(+) + H2O. The catalysed reaction is NADPH + O2 + H(+) = H2O2 + NADP(+). In terms of biological role, monooxygenase that promotes depolymerization of F-actin by mediating oxidation of specific methionine residues on actin to form methionine-sulfoxide, resulting in actin filament disassembly and preventing repolymerization. In the absence of actin, it also functions as a NADPH oxidase producing H(2)O(2). Acts as a cytoskeletal regulator that connects NEDD9 to intermediate filaments. Also acts as a negative regulator of apoptosis via its interaction with STK38 and STK38L; acts by antagonizing STK38 and STK38L activation by MST1/STK4. Involved in regulation of lamina-specific connectivity in the nervous system such as the development of lamina-restricted hippocampal connections. Through redox regulation of the actin cytoskeleton controls the intracellular distribution of secretory vesicles containing L1/neurofascin/NgCAM family proteins in neurons, thereby regulating their cell surface levels. May act as Rab effector protein and play a role in vesicle trafficking. Promotes endosomal tubule extension by associating with RAB8 (RAB8A or RAB8B), RAB10 and GRAF (GRAF1/ARHGAP26 or GRAF2/ARHGAP10) on the endosomal membrane which may connect GRAFs to Rabs, thereby participating in neosynthesized Rab8-Rab10-Rab11-dependent protein export. In Homo sapiens (Human), this protein is [F-actin]-monooxygenase MICAL1 (MICAL1).